Here is a 133-residue protein sequence, read N- to C-terminus: Large ribosomal subunit protein bL20 (133 aa).

It belongs to the bacterial ribosomal protein bL20 family.

In terms of biological role, binds directly to 23S ribosomal RNA and is necessary for the in vitro assembly process of the 50S ribosomal subunit. It is not involved in the protein synthesizing functions of that subunit. This Bartonella quintana (strain Toulouse) (Rochalimaea quintana) protein is Large ribosomal subunit protein bL20.